The chain runs to 753 residues: Putative cyclic nucleotide-gated ion channel 8 (753 aa).

Over 1–111 the chain is Cytoplasmic; the sequence is MYKSQYISGH…DKTLLLWNRM (111 aa). A helical membrane pass occupies residues 112-132; sequence FVISCILAVSVDPLFFYLPIV. The Extracellular portion of the chain corresponds to 133–145; sequence DNSKNCIGIDSKL. Residues 146–166 traverse the membrane as a helical segment; that stretch reads AVTTTTLRTIIDVFYLTRMAL. At 167–199 the chain is on the cytoplasmic side; the sequence is QFRTAYIAPSSRVFGRGELVIDPAKIAERYLTR. Residues 200 to 220 traverse the membrane as a helical segment; the sequence is YFIVDFLAVLPLPQIAVWKFL. Over 221–233 the chain is Extracellular; it reads HGSKGTDVLPTKQ. Residues 234–254 form a helical membrane-spanning segment; that stretch reads ALLHIVITQYIPRFVRFIPLT. Residues 255-274 are Cytoplasmic-facing; the sequence is SELKKTAGAFAEGAWAGAAY. Residues 275–295 form a helical membrane-spanning segment; the sequence is YLLWYMLASHITGAFWYMLSV. Topologically, residues 296–402 are extracellular; it reads ERNDTCLRSA…QGLQTSTYPG (107 aa). The chain crosses the membrane as a helical span at residues 403–423; it reads EVLFSIAIAVAGLLLFALLIG. The Cytoplasmic portion of the chain corresponds to 424 to 753; the sequence is NMQTYLQSLT…FEALDTDDLN (330 aa). Residues 508–638 and Glu-579 contribute to the a nucleoside 3',5'-cyclic phosphate site; that span reads LFAN…TFRF. A calmodulin-binding region spans residues 624 to 639; sequence FRRLHSRQVQQTFRFY. One can recognise an IQ domain in the interval 644-673; the sequence is RTWAACFIQAAWRRHLRRKIAELRRKEEEE. The tract at residues 731–753 is disordered; it reads KSLMNLTKPSEPDFEALDTDDLN. Residues 742–753 are compositionally biased toward acidic residues; it reads PDFEALDTDDLN.

Belongs to the cyclic nucleotide-gated cation channel (TC 1.A.1.5) family. Homotetramer or heterotetramer.

It is found in the cell membrane. Its function is as follows. Putative cyclic nucleotide-gated ion channel. This chain is Putative cyclic nucleotide-gated ion channel 8 (CNGC8), found in Arabidopsis thaliana (Mouse-ear cress).